We begin with the raw amino-acid sequence, 501 residues long: Archaemetzincin-1 (501 aa).

A Zn(2+)-binding site is contributed by H261. Residue E262 is the Proton acceptor of the active site. Positions 265, 272, 277, 296, and 299 each coordinate Zn(2+). A disordered region spans residues 349–370 (DSGMGCESDTEPVTSPSEPVTP).

The protein belongs to the peptidase M54 family. Requires Zn(2+) as cofactor.

In terms of biological role, probable zinc metalloprotease. This is Archaemetzincin-1 (Amz1) from Rattus norvegicus (Rat).